The primary structure comprises 479 residues: Leucine-rich repeat-containing protein 74A (479 aa).

Residues Met-1–Glu-10 show a composition bias toward acidic residues. The segment at Met-1–Thr-29 is disordered. LRR repeat units lie at residues Thr-119–Glu-140, Tyr-147–Ser-167, Ser-176–Gln-197, Arg-204–Gln-225, Gly-232–Asn-253, Thr-260–Asp-281, Cys-288–Lys-309, and Cys-316–Ile-336.

This Rattus norvegicus (Rat) protein is Leucine-rich repeat-containing protein 74A.